Here is a 400-residue protein sequence, read N- to C-terminus: tRNA-specific adenosine deaminase TAD3 (400 aa).

Residues 250-385 (SQWHPLRHAS…KSLNHHYAVF (136 aa)) form the CMP/dCMP-type deaminase domain. Histidine 257 serves as a coordination point for Zn(2+). The tract at residues 273–320 (LFPNPSKIFDQDHVPPSNTDSPAKKQKTSSQSPDVQNDSREETVRDPS) is disordered. Residues 309–320 (NDSREETVRDPS) are compositionally biased toward basic and acidic residues. Residues cysteine 339 and cysteine 342 each contribute to the Zn(2+) site.

Belongs to the cytidine and deoxycytidylate deaminase family. ADAT3 subfamily. In terms of assembly, interacts with TAD2.

The protein resides in the nucleus. It is found in the cytoplasm. The catalysed reaction is adenosine(34) in tRNA + H2O + H(+) = inosine(34) in tRNA + NH4(+). In terms of biological role, involved in RNA editing. Catalyzes the specific deamination of adenosine-34 in several cytosolic tRNA species. Generates inosine at the wobble position of the anticodon loop. In Arabidopsis thaliana (Mouse-ear cress), this protein is tRNA-specific adenosine deaminase TAD3.